The chain runs to 274 residues: Large ribosomal subunit protein uL2cz/uL2cy (274 aa).

Disordered regions lie at residues 1 to 21 (MAIHLYKTSTPGTRNGAVDSQ) and 225 to 274 (PVDH…RRSK).

Belongs to the universal ribosomal protein uL2 family. In terms of assembly, part of the 50S ribosomal subunit.

The protein resides in the plastid. It is found in the chloroplast. In Gossypium barbadense (Sea Island cotton), this protein is Large ribosomal subunit protein uL2cz/uL2cy (rpl2-A).